The chain runs to 20 residues: Non-secretory ribonuclease (20 aa).

Residue His-16 is the Proton acceptor of the active site.

The protein belongs to the pancreatic ribonuclease family. In terms of assembly, interacts with and forms a tight 1:1 complex with RNH1. Dimerization of two such complexes may occur.

It is found in the lysosome. The protein resides in the cytoplasmic granule. It catalyses the reaction an [RNA] containing cytidine + H2O = an [RNA]-3'-cytidine-3'-phosphate + a 5'-hydroxy-ribonucleotide-3'-[RNA].. The enzyme catalyses an [RNA] containing uridine + H2O = an [RNA]-3'-uridine-3'-phosphate + a 5'-hydroxy-ribonucleotide-3'-[RNA].. In terms of biological role, this is a non-secretory ribonuclease. It is a pyrimidine specific nuclease with a slight preference for U. Cytotoxin and helminthotoxin. Possesses a wide variety of biological activities. In Sus scrofa (Pig), this protein is Non-secretory ribonuclease (RNASE2).